A 181-amino-acid chain; its full sequence is MGRAREIGEGNSSSLREQRNLREKDRRMRMKHLFSILSSHVSPTRKLPVPHLIDQATSYMIQLKENVNYLKEKKRTLLQGELGNLYEGSFLLPKLSIRSRDSTIEMNLIMDLNMKRVMLHELVSIFEEEGAQVMSANLQNLNDRTTYTIIAQAIISRIGIDPSRIEERVRKIIYGYIYFEA.

The tract at residues 1-22 is disordered; that stretch reads MGRAREIGEGNSSSLREQRNLR. The bHLH domain maps to 14–63; the sequence is SLREQRNLREKDRRMRMKHLFSILSSHVSPTRKLPVPHLIDQATSYMIQL.

Belongs to the bHLH protein family.

It localises to the nucleus. This Arabidopsis thaliana (Mouse-ear cress) protein is Transcription factor bHLH167.